We begin with the raw amino-acid sequence, 138 residues long: ATP synthase epsilon chain (138 aa).

Basic and acidic residues predominate over residues 89-114; sequence KDTAQQEWNEAQKRLDEASKSGDRQK. The interval 89-117 is disordered; that stretch reads KDTAQQEWNEAQKRLDEASKSGDRQKQIQ.

Belongs to the ATPase epsilon chain family. F-type ATPases have 2 components, CF(1) - the catalytic core - and CF(0) - the membrane proton channel. CF(1) has five subunits: alpha(3), beta(3), gamma(1), delta(1), epsilon(1). CF(0) has three main subunits: a, b and c.

The protein localises to the cellular thylakoid membrane. Functionally, produces ATP from ADP in the presence of a proton gradient across the membrane. The protein is ATP synthase epsilon chain of Gloeothece citriformis (strain PCC 7424) (Cyanothece sp. (strain PCC 7424)).